The sequence spans 254 residues: Alcohol dehydrogenase (254 aa).

10-33 (FVAGLGGIGLDTSREIVKSGPKNL) is an NAD(+) binding site. Substrate is bound at residue serine 138. Tyrosine 151 functions as the Proton acceptor in the catalytic mechanism.

Belongs to the short-chain dehydrogenases/reductases (SDR) family. In terms of assembly, homodimer.

It carries out the reaction a primary alcohol + NAD(+) = an aldehyde + NADH + H(+). The enzyme catalyses a secondary alcohol + NAD(+) = a ketone + NADH + H(+). The chain is Alcohol dehydrogenase (Adh) from Drosophila flavomontana (Fruit fly).